Consider the following 113-residue polypeptide: Ig heavy chain V-III region U61 (113 aa).

The 113-residue stretch at 1 to 113 (EVKLEESGGG…YWGQGTLVPV (113 aa)) folds into the Ig-like domain. Cysteines 22 and 98 form a disulfide.

The chain is Ig heavy chain V-III region U61 from Mus musculus (Mouse).